The sequence spans 278 residues: Diaminopimelate epimerase (278 aa).

The substrate site is built by asparagine 11 and asparagine 63. Cysteine 72 functions as the Proton donor in the catalytic mechanism. Substrate is bound by residues 73–74 (GN), asparagine 160, asparagine 193, and 211–212 (ER). Cysteine 220 acts as the Proton acceptor in catalysis. Residue 221–222 (GT) coordinates substrate.

The protein belongs to the diaminopimelate epimerase family. Homodimer.

The protein resides in the cytoplasm. The catalysed reaction is (2S,6S)-2,6-diaminopimelate = meso-2,6-diaminopimelate. It participates in amino-acid biosynthesis; L-lysine biosynthesis via DAP pathway; DL-2,6-diaminopimelate from LL-2,6-diaminopimelate: step 1/1. Catalyzes the stereoinversion of LL-2,6-diaminopimelate (L,L-DAP) to meso-diaminopimelate (meso-DAP), a precursor of L-lysine and an essential component of the bacterial peptidoglycan. This chain is Diaminopimelate epimerase, found in Desulforudis audaxviator (strain MP104C).